The following is a 141-amino-acid chain: Large ribosomal subunit protein uL11 (141 aa).

This sequence belongs to the universal ribosomal protein uL11 family. As to quaternary structure, part of the ribosomal stalk of the 50S ribosomal subunit. Interacts with L10 and the large rRNA to form the base of the stalk. L10 forms an elongated spine to which L12 dimers bind in a sequential fashion forming a multimeric L10(L12)X complex. In terms of processing, one or more lysine residues are methylated.

Its function is as follows. Forms part of the ribosomal stalk which helps the ribosome interact with GTP-bound translation factors. The polypeptide is Large ribosomal subunit protein uL11 (Synechococcus sp. (strain ATCC 27144 / PCC 6301 / SAUG 1402/1) (Anacystis nidulans)).